A 67-amino-acid chain; its full sequence is Large ribosomal subunit protein bL32 (67 aa).

A compositionally biased stretch (basic residues) spans 1-19; sequence MAVPKRKQSRANTHARRSQ. Positions 1 to 20 are disordered; the sequence is MAVPKRKQSRANTHARRSQW.

Belongs to the bacterial ribosomal protein bL32 family.

The polypeptide is Large ribosomal subunit protein bL32 (Leifsonia xyli subsp. xyli (strain CTCB07)).